A 266-amino-acid polypeptide reads, in one-letter code: Interleukin-1 beta (266 aa).

Positions 1–113 (MAPVPEPINE…ETSSDEFLCD (113 aa)) are excised as a propeptide.

Belongs to the IL-1 family. As to quaternary structure, monomer. In its precursor form, weakly interacts with full-length MEFV; the mature cytokine does not interact at all. Interacts with integrins ITGAV:ITGBV and ITGA5:ITGB1; integrin-binding is required for IL1B signaling. Interacts with cargo receptor TMED10; the interaction is direct and is required for the secretion of IL1B mature form. Interacts with HSP90AB1; the interaction facilitates cargo translocation into the ERGIC. Interacts with HSP90B1; the interaction facilitates cargo translocation into the ERGIC.

It localises to the cytoplasm. Its subcellular location is the cytosol. It is found in the secreted. The protein resides in the lysosome. The protein localises to the extracellular exosome. Its function is as follows. Potent pro-inflammatory cytokine. Initially discovered as the major endogenous pyrogen, induces prostaglandin synthesis, neutrophil influx and activation, T-cell activation and cytokine production, B-cell activation and antibody production, and fibroblast proliferation and collagen production. Promotes Th17 differentiation of T-cells. Synergizes with IL12/interleukin-12 to induce IFNG synthesis from T-helper 1 (Th1) cells. Plays a role in angiogenesis by inducing VEGF production synergistically with TNF and IL6. Involved in transduction of inflammation downstream of pyroptosis: its mature form is specifically released in the extracellular milieu by passing through the gasdermin-D (GSDMD) pore. This chain is Interleukin-1 beta (IL1B), found in Cervus elaphus (Red deer).